Consider the following 197-residue polypeptide: NADH-quinone oxidoreductase subunit C (197 aa).

The protein belongs to the complex I 30 kDa subunit family. As to quaternary structure, NDH-1 is composed of 14 different subunits. Subunits NuoB, C, D, E, F, and G constitute the peripheral sector of the complex.

It is found in the cell inner membrane. It catalyses the reaction a quinone + NADH + 5 H(+)(in) = a quinol + NAD(+) + 4 H(+)(out). Functionally, NDH-1 shuttles electrons from NADH, via FMN and iron-sulfur (Fe-S) centers, to quinones in the respiratory chain. The immediate electron acceptor for the enzyme in this species is believed to be ubiquinone. Couples the redox reaction to proton translocation (for every two electrons transferred, four hydrogen ions are translocated across the cytoplasmic membrane), and thus conserves the redox energy in a proton gradient. This is NADH-quinone oxidoreductase subunit C from Neisseria meningitidis serogroup C (strain 053442).